Here is a 118-residue protein sequence, read N- to C-terminus: Small ribosomal subunit protein uS13 (118 aa).

The tract at residues histidine 91–arginine 118 is disordered.

The protein belongs to the universal ribosomal protein uS13 family. As to quaternary structure, part of the 30S ribosomal subunit. Forms a loose heterodimer with protein S19. Forms two bridges to the 50S subunit in the 70S ribosome.

Located at the top of the head of the 30S subunit, it contacts several helices of the 16S rRNA. In the 70S ribosome it contacts the 23S rRNA (bridge B1a) and protein L5 of the 50S subunit (bridge B1b), connecting the 2 subunits; these bridges are implicated in subunit movement. Contacts the tRNAs in the A and P-sites. The polypeptide is Small ribosomal subunit protein uS13 (Hydrogenovibrio crunogenus (strain DSM 25203 / XCL-2) (Thiomicrospira crunogena)).